Reading from the N-terminus, the 163-residue chain is Pheromone-binding protein (163 aa).

The N-terminal stretch at 1 to 21 is a signal peptide; sequence MLRKISLLLLPVFVAINLVHS. 3 disulfides stabilise this stretch: cysteine 40-cysteine 75, cysteine 71-cysteine 129, and cysteine 118-cysteine 138.

This sequence belongs to the PBP/GOBP family. Homodimer. As to expression, antenna.

In terms of biological role, this major soluble protein in olfactory sensilla of male moths might serve to solubilize the extremely hydrophobic pheromone molecules and to transport pheromone through the aqueous lymph to receptors located on olfactory cilia. This is Pheromone-binding protein from Antheraea polyphemus (Polyphemus moth).